Reading from the N-terminus, the 504-residue chain is Maturase K (504 aa).

This sequence belongs to the intron maturase 2 family. MatK subfamily.

It localises to the plastid. The protein resides in the chloroplast. Its function is as follows. Usually encoded in the trnK tRNA gene intron. Probably assists in splicing its own and other chloroplast group II introns. This Draba nemorosa (Woodland whitlowgrass) protein is Maturase K.